Consider the following 194-residue polypeptide: Peptidyl-tRNA hydrolase (194 aa).

Position 17 (tyrosine 17) interacts with tRNA. The active-site Proton acceptor is the histidine 22. TRNA is bound by residues phenylalanine 68, asparagine 70, and asparagine 116.

It belongs to the PTH family. In terms of assembly, monomer.

It localises to the cytoplasm. It catalyses the reaction an N-acyl-L-alpha-aminoacyl-tRNA + H2O = an N-acyl-L-amino acid + a tRNA + H(+). Functionally, hydrolyzes ribosome-free peptidyl-tRNAs (with 1 or more amino acids incorporated), which drop off the ribosome during protein synthesis, or as a result of ribosome stalling. Its function is as follows. Catalyzes the release of premature peptidyl moieties from peptidyl-tRNA molecules trapped in stalled 50S ribosomal subunits, and thus maintains levels of free tRNAs and 50S ribosomes. This is Peptidyl-tRNA hydrolase from Histophilus somni (strain 129Pt) (Haemophilus somnus).